We begin with the raw amino-acid sequence, 600 residues long: Probable methyltransferase PMT21 (600 aa).

Residues 1 to 16 (MKYKDEKYEKAEKGSR) lie on the Cytoplasmic side of the membrane. The chain crosses the membrane as a helical; Signal-anchor for type II membrane protein span at residues 17 to 37 (ILPKTVLLILLCGLSFYLGGL). At 38 to 600 (YCGKNIIEVS…YSSNASSETN (563 aa)) the chain is on the lumenal side. The N-linked (GlcNAc...) asparagine glycan is linked to asparagine 594.

The protein belongs to the methyltransferase superfamily.

Its subcellular location is the endoplasmic reticulum membrane. The chain is Probable methyltransferase PMT21 (ERD3) from Arabidopsis thaliana (Mouse-ear cress).